Here is a 95-residue protein sequence, read N- to C-terminus: Large ribosomal subunit protein uL23 (95 aa).

It belongs to the universal ribosomal protein uL23 family. In terms of assembly, part of the 50S ribosomal subunit. Contacts protein L29, and trigger factor when it is bound to the ribosome.

In terms of biological role, one of the early assembly proteins it binds 23S rRNA. One of the proteins that surrounds the polypeptide exit tunnel on the outside of the ribosome. Forms the main docking site for trigger factor binding to the ribosome. The protein is Large ribosomal subunit protein uL23 of Pediococcus pentosaceus (strain ATCC 25745 / CCUG 21536 / LMG 10740 / 183-1w).